The primary structure comprises 520 residues: Bifunctional purine biosynthesis protein PurH (520 aa).

The MGS-like domain maps to 1 to 150; sequence MSDDRKAIKR…KNHPSVAVVV (150 aa).

This sequence belongs to the PurH family.

The enzyme catalyses (6R)-10-formyltetrahydrofolate + 5-amino-1-(5-phospho-beta-D-ribosyl)imidazole-4-carboxamide = 5-formamido-1-(5-phospho-D-ribosyl)imidazole-4-carboxamide + (6S)-5,6,7,8-tetrahydrofolate. It carries out the reaction IMP + H2O = 5-formamido-1-(5-phospho-D-ribosyl)imidazole-4-carboxamide. The protein operates within purine metabolism; IMP biosynthesis via de novo pathway; 5-formamido-1-(5-phospho-D-ribosyl)imidazole-4-carboxamide from 5-amino-1-(5-phospho-D-ribosyl)imidazole-4-carboxamide (10-formyl THF route): step 1/1. Its pathway is purine metabolism; IMP biosynthesis via de novo pathway; IMP from 5-formamido-1-(5-phospho-D-ribosyl)imidazole-4-carboxamide: step 1/1. This Corynebacterium glutamicum (strain R) protein is Bifunctional purine biosynthesis protein PurH.